The following is a 303-amino-acid chain: Mycothiol acetyltransferase (303 aa).

N-acetyltransferase domains lie at 3–152 (VTVT…VSLP) and 155–303 (VRIR…MYRS). Residue Asp35 participates in 1D-myo-inositol 2-(L-cysteinylamino)-2-deoxy-alpha-D-glucopyranoside binding. Residue 79-81 (LTV) coordinates acetyl-CoA. 1D-myo-inositol 2-(L-cysteinylamino)-2-deoxy-alpha-D-glucopyranoside contacts are provided by Glu182, Lys224, and Glu237. Residues 241-243 (VGV) and 248-254 (QGSGLGR) each bind acetyl-CoA. Tyr275 contacts 1D-myo-inositol 2-(L-cysteinylamino)-2-deoxy-alpha-D-glucopyranoside.

It belongs to the acetyltransferase family. MshD subfamily. As to quaternary structure, monomer.

It carries out the reaction 1D-myo-inositol 2-(L-cysteinylamino)-2-deoxy-alpha-D-glucopyranoside + acetyl-CoA = mycothiol + CoA + H(+). Its function is as follows. Catalyzes the transfer of acetyl from acetyl-CoA to desacetylmycothiol (Cys-GlcN-Ins) to form mycothiol. In Kocuria rhizophila (strain ATCC 9341 / DSM 348 / NBRC 103217 / DC2201), this protein is Mycothiol acetyltransferase.